The sequence spans 65 residues: uncharacterized protein (65 aa).

Residues 1 to 65 (MIALSVCWQI…ETGIGYRFML (65 aa)) constitute a DNA-binding region (ompR/PhoB-type).

This is an uncharacterized protein from Escherichia coli (strain K12).